The chain runs to 333 residues: Ribosomal RNA small subunit methyltransferase C (333 aa).

Belongs to the methyltransferase superfamily. RsmC family. In terms of assembly, monomer.

The protein localises to the cytoplasm. The enzyme catalyses guanosine(1207) in 16S rRNA + S-adenosyl-L-methionine = N(2)-methylguanosine(1207) in 16S rRNA + S-adenosyl-L-homocysteine + H(+). Functionally, specifically methylates the guanine in position 1207 of 16S rRNA in the 30S particle. This is Ribosomal RNA small subunit methyltransferase C from Chromohalobacter salexigens (strain ATCC BAA-138 / DSM 3043 / CIP 106854 / NCIMB 13768 / 1H11).